The chain runs to 142 residues: Hemoglobin subunit alpha (142 aa).

Ser1 is subject to N-acetylserine. The region spanning 1–142 (SLSDKDKNTV…LALALSERYR (142 aa)) is the Globin domain. Position 59 (His59) interacts with O2. Residue His88 participates in heme b binding.

Belongs to the globin family. Heterotetramer of two alpha chains and two beta chains. Can form polymers. Red blood cells.

Its function is as follows. Involved in oxygen transport from gills to the various peripheral tissues. In Chelidonichthys kumu (Bluefin gurnard), this protein is Hemoglobin subunit alpha (hba).